Here is a 272-residue protein sequence, read N- to C-terminus: Shikimate dehydrogenase (NADP(+)) (272 aa).

Residues 19 to 21 (SLS) and Thr-66 each bind shikimate. Residue Lys-70 is the Proton acceptor of the active site. An NADP(+)-binding site is contributed by Glu-82. Asn-91 and Asp-106 together coordinate shikimate. NADP(+) contacts are provided by residues 129–133 (GAGGA), 151–156 (NRTPEK), and Ile-214. Position 216 (Tyr-216) interacts with shikimate. Gly-237 lines the NADP(+) pocket.

Belongs to the shikimate dehydrogenase family. Homodimer.

The catalysed reaction is shikimate + NADP(+) = 3-dehydroshikimate + NADPH + H(+). The protein operates within metabolic intermediate biosynthesis; chorismate biosynthesis; chorismate from D-erythrose 4-phosphate and phosphoenolpyruvate: step 4/7. Its function is as follows. Involved in the biosynthesis of the chorismate, which leads to the biosynthesis of aromatic amino acids. Catalyzes the reversible NADPH linked reduction of 3-dehydroshikimate (DHSA) to yield shikimate (SA). This is Shikimate dehydrogenase (NADP(+)) from Thermococcus kodakarensis (strain ATCC BAA-918 / JCM 12380 / KOD1) (Pyrococcus kodakaraensis (strain KOD1)).